A 234-amino-acid chain; its full sequence is Probable RNA/DNA demethylase ALKBH6 (234 aa).

The 127-residue stretch at 96 to 222 (TANHVLVNEY…RVSLTIRHVP (127 aa)) folds into the Fe2OG dioxygenase domain. 2-oxoglutarate-binding residues include N103 and Y105. Fe cation contacts are provided by H114, D116, and H180. Positions 213 and 215 each coordinate 2-oxoglutarate.

It belongs to the alkB family. The cofactor is Fe(2+).

It is found in the cytoplasm. The protein resides in the nucleus. In terms of biological role, probable Fe(2+)/2-oxoglutarate-dependent dioxygenase involved in oxidative demethylation of nucleic acids. Binds nucleic acids with a preference for ssDNA or ssRNA to other types of DNAs. May play a role in nucleic acid damage repair. The sequence is that of Probable RNA/DNA demethylase ALKBH6 (alkbh6) from Danio rerio (Zebrafish).